The primary structure comprises 359 residues: Membrane-bound lytic murein transglycosylase C (359 aa).

The N-terminal stretch at 1–16 (MKKYLALALIAPLLIS) is a signal peptide. Cys17 carries N-palmitoyl cysteine lipidation. Residue Cys17 is the site of S-diacylglycerol cysteine attachment.

This sequence belongs to the transglycosylase Slt family.

Its subcellular location is the cell outer membrane. It catalyses the reaction Exolytic cleavage of the (1-&gt;4)-beta-glycosidic linkage between N-acetylmuramic acid (MurNAc) and N-acetylglucosamine (GlcNAc) residues in peptidoglycan, from either the reducing or the non-reducing ends of the peptidoglycan chains, with concomitant formation of a 1,6-anhydrobond in the MurNAc residue.. Murein-degrading enzyme. May play a role in recycling of muropeptides during cell elongation and/or cell division. This Escherichia coli O7:K1 (strain IAI39 / ExPEC) protein is Membrane-bound lytic murein transglycosylase C.